A 365-amino-acid polypeptide reads, in one-letter code: Histidinol-phosphate aminotransferase (365 aa).

Position 223 is an N6-(pyridoxal phosphate)lysine (Lys223).

It belongs to the class-II pyridoxal-phosphate-dependent aminotransferase family. Histidinol-phosphate aminotransferase subfamily. In terms of assembly, homodimer. The cofactor is pyridoxal 5'-phosphate.

The catalysed reaction is L-histidinol phosphate + 2-oxoglutarate = 3-(imidazol-4-yl)-2-oxopropyl phosphate + L-glutamate. Its pathway is amino-acid biosynthesis; L-histidine biosynthesis; L-histidine from 5-phospho-alpha-D-ribose 1-diphosphate: step 7/9. In Brucella abortus (strain 2308), this protein is Histidinol-phosphate aminotransferase.